We begin with the raw amino-acid sequence, 211 residues long: Probable GTP-binding protein EngB (211 aa).

The 176-residue stretch at serine 13–phenylalanine 188 folds into the EngB-type G domain. GTP is bound by residues glycine 21–serine 28, glycine 48–methionine 52, aspartate 67–glycine 70, threonine 134–aspartate 137, and phenylalanine 167–serine 169. Mg(2+) contacts are provided by serine 28 and threonine 50.

This sequence belongs to the TRAFAC class TrmE-Era-EngA-EngB-Septin-like GTPase superfamily. EngB GTPase family. Mg(2+) serves as cofactor.

Necessary for normal cell division and for the maintenance of normal septation. This Acinetobacter baumannii (strain ATCC 17978 / DSM 105126 / CIP 53.77 / LMG 1025 / NCDC KC755 / 5377) protein is Probable GTP-binding protein EngB.